A 325-amino-acid chain; its full sequence is Glutarate 2-hydroxylase (325 aa).

H160, D162, and H292 together coordinate Fe cation.

The protein belongs to the glutarate hydroxylase family. In terms of assembly, homotetramer. Fe(2+) serves as cofactor.

The catalysed reaction is glutarate + 2-oxoglutarate + O2 = (S)-2-hydroxyglutarate + succinate + CO2. It functions in the pathway amino-acid degradation. Its function is as follows. Acts as an alpha-ketoglutarate-dependent dioxygenase catalyzing hydroxylation of glutarate (GA) to L-2-hydroxyglutarate (L2HG). Functions in a L-lysine degradation pathway that proceeds via cadaverine, glutarate and L-2-hydroxyglutarate. Is extremely specific for glutarate, but it can use both 2-oxoglutarate and 2-oxoadipate (2OA) as a cosubstrate for L2HG formation. The polypeptide is Glutarate 2-hydroxylase (Pseudomonas putida (strain ATCC 47054 / DSM 6125 / CFBP 8728 / NCIMB 11950 / KT2440)).